A 548-amino-acid chain; its full sequence is MDSQRNLLVIALLFVSFMIWQAWEQDKNPQPQAQQTTQTTTTAAGSAADQGVPASGQGKLISVKTDVLDLTINTRGGDVEQALLPAYPKELNSTQPFQLLETSPQFIYQAQSGLTGRDGPDNPANGPRPLYNVEKDAYVLAEGQNELQVPMTYTDAAGNTFTKTFILKRGDYAVNVNYNVQNAGEKPLEISTFGQLKQSITLPPYLDTGSSNFALHTFRGAAYSTPDEKYEKYKFDTIADNENLNISSKGGWVAMLQQYFATAWIPHNDGTNNFYTANLGNGIAAIGYKSQPVLVQPGQTGAMNSTLWVGPEIQDKMAAVAPHLDLTVDYGWLWFISQPLFKLLKWIHSFVGNWGFSIIIITFIVRGIMYPLTKAQYTSMAKMRMLQPKIQAMRERLGDDKQRISQEMMALYKAEKVNPLGGCFPLLIQMPIFLALYYMLMGSVELRQAPFALWIHDLSAQDPYYILPILMGVTMFFIQKMSPTTVTDPMQQKIMTFMPVIFTVFFLWFPSGLVLYYIVSNLVTIIQQQLIYRGLEKRGLHSREKKKS.

Residues 6–26 form a helical membrane-spanning segment; that stretch reads NLLVIALLFVSFMIWQAWEQD. Positions 28-55 are disordered; it reads NPQPQAQQTTQTTTTAAGSAADQGVPAS. Over residues 30–50 the composition is skewed to low complexity; the sequence is QPQAQQTTQTTTTAAGSAADQ. A run of 4 helical transmembrane segments spans residues 350-370, 420-440, 458-478, and 499-519; these read FVGNWGFSIIIITFIVRGIMY, LGGCFPLLIQMPIFLALYYML, LSAQDPYYILPILMGVTMFFI, and PVIFTVFFLWFPSGLVLYYIV.

The protein belongs to the OXA1/ALB3/YidC family. Type 1 subfamily. As to quaternary structure, interacts with the Sec translocase complex via SecD. Specifically interacts with transmembrane segments of nascent integral membrane proteins during membrane integration.

The protein localises to the cell inner membrane. Functionally, required for the insertion and/or proper folding and/or complex formation of integral membrane proteins into the membrane. Involved in integration of membrane proteins that insert both dependently and independently of the Sec translocase complex, as well as at least some lipoproteins. Aids folding of multispanning membrane proteins. The sequence is that of Membrane protein insertase YidC from Escherichia fergusonii (strain ATCC 35469 / DSM 13698 / CCUG 18766 / IAM 14443 / JCM 21226 / LMG 7866 / NBRC 102419 / NCTC 12128 / CDC 0568-73).